Consider the following 497-residue polypeptide: Chlorophyllide reductase 52.5 kDa chain (497 aa).

The next 3 helical transmembrane spans lie at V65 to I82, A126 to L142, and M216 to V233.

Belongs to the BchN/ChlN family. As to quaternary structure, chlorophyllide reductase is composed of three subunits; BchX, BchY and BchZ. Forms a heterodimer of one BchY and one BchZ subunit.

The protein localises to the cell membrane. The enzyme catalyses 3-deacetyl-3-vinylbacteriochlorophyllide a + 2 oxidized [2Fe-2S]-[ferredoxin] + ADP + phosphate = chlorophyllide a + 2 reduced [2Fe-2S]-[ferredoxin] + ATP + H2O + H(+). The catalysed reaction is bacteriochlorophyllide a + 2 oxidized [2Fe-2S]-[ferredoxin] + ADP + phosphate = 3-acetyl-3-devinylchlorophyllide a + 2 reduced [2Fe-2S]-[ferredoxin] + ATP + H2O + H(+). It carries out the reaction 3-deacetyl-3-(1-hydroxyethyl)bacteriochlorophyllide a + 2 oxidized [2Fe-2S]-[ferredoxin] + ADP + phosphate = 3-devinyl-3-(1-hydroxyethyl)chlorophyllide a + 2 reduced [2Fe-2S]-[ferredoxin] + ATP + H2O + H(+). It functions in the pathway porphyrin-containing compound metabolism; bacteriochlorophyll biosynthesis (light-independent). In terms of biological role, converts chlorophylls (Chl) into bacteriochlorophylls (BChl) by reducing ring B of the tetrapyrrole. This Rhodobacter capsulatus (strain ATCC BAA-309 / NBRC 16581 / SB1003) protein is Chlorophyllide reductase 52.5 kDa chain (bchY).